Reading from the N-terminus, the 293-residue chain is Forkhead box protein N5 (293 aa).

The disordered stretch occupies residues 104 to 152 (TSPPLQLQRQLSNDYSTVEDSEDEAPTSCSDVLTDDDDSYNPWQPKHKR). Residues 106–119 (PPLQLQRQLSNDYS) show a composition bias toward polar residues. The fork-head DNA-binding region spans 176–273 (RPPLNYCNLI…NEMHALSDDL (98 aa)).

The protein resides in the nucleus. The polypeptide is Forkhead box protein N5 (Xenopus tropicalis (Western clawed frog)).